The chain runs to 307 residues: Protoheme IX farnesyltransferase (307 aa).

Helical transmembrane passes span 28–48 (LVIF…NPIL), 50–70 (FTAI…NQWW), 99–117 (FGIL…AINW), 121–138 (IILA…TIWL), 146–166 (IVIG…AVTG), 173–193 (VLLF…LALF), 219–239 (ILVY…IGAT), 241–261 (AIYG…SVPV), and 278–298 (LFGF…ADRY).

This sequence belongs to the UbiA prenyltransferase family. Protoheme IX farnesyltransferase subfamily.

The protein localises to the cell inner membrane. The catalysed reaction is heme b + (2E,6E)-farnesyl diphosphate + H2O = Fe(II)-heme o + diphosphate. It functions in the pathway porphyrin-containing compound metabolism; heme O biosynthesis; heme O from protoheme: step 1/1. Converts heme B (protoheme IX) to heme O by substitution of the vinyl group on carbon 2 of heme B porphyrin ring with a hydroxyethyl farnesyl side group. The chain is Protoheme IX farnesyltransferase from Erythrobacter litoralis (strain HTCC2594).